The sequence spans 132 residues: Glycine-rich protein 3 (132 aa).

Residues methionine 1–alanine 20 form the signal peptide.

As to expression, prismatic layer of shell (at protein level). Expressed primarily in the mantle with highest level in the mantle edge and lower level in the mantle pallium.

It is found in the secreted. This is Glycine-rich protein 3 from Pinctada maxima (Silver-lipped pearl oyster).